We begin with the raw amino-acid sequence, 62 residues long: Venom peptide SjAPI-2 (62 aa).

Cystine bridges form between cysteine 4-cysteine 40, cysteine 14-cysteine 36, cysteine 18-cysteine 32, cysteine 22-cysteine 60, and cysteine 42-cysteine 54. The region spanning 4–60 (CRISGEVFTWCGTTCPLTCENFRNPPKHCPQGCFVGCMCRRGLVRHRNGRCVRPPRC) is the TIL domain.

The protein belongs to the serine protease inhibitor-like (TIL domain-containing) family. Expressed by the venom gland.

The protein resides in the secreted. In terms of biological role, serine protease inhibitor. The sequence is that of Venom peptide SjAPI-2 from Scorpiops jendeki (Scorpion).